The primary structure comprises 623 residues: Vacuolar-sorting receptor 1 (623 aa).

The signal sequence occupies residues 1–22 (MKCWRLSAILFLGFMLTSLSTA). Residues 23-564 (RFVVEKNSLS…SKTASQAKST (542 aa)) lie on the Lumenal side of the membrane. In terms of domain architecture, PA spans 54–163 (QYGGSMAGNV…SFGEKLKDAI (110 aa)). Residue asparagine 143 is glycosylated (N-linked (GlcNAc...) asparagine). 2 EGF-like domains span residues 411 to 461 (ETNE…TTCE) and 464 to 511 (GHGR…KNCE). Cystine bridges form between cysteine 415/cysteine 433, cysteine 422/cysteine 442, cysteine 444/cysteine 460, cysteine 468/cysteine 488, cysteine 475/cysteine 496, and cysteine 498/cysteine 510. The EGF-like 3; calcium-binding domain maps to 512–554 (DIDECKDKKACQCPECSCKNTWGSYNCSCSGDLLYIKDQDTCI). N-linked (GlcNAc...) asparagine glycosylation occurs at asparagine 537. An intrachain disulfide couples cysteine 540 to cysteine 553. A helical membrane pass occupies residues 565–585 (WAAFWVVLIALAMIAGGGFLV). At 586 to 623 (YKYRIRQYMDSEIRAIMAQYMPLDSQEEGPNHVNHQRG) the chain is on the cytoplasmic side. The Tyrosine-based internalization motif motif lies at 605–608 (YMPL).

It belongs to the VSR (BP-80) family. Interacts with the N-terminal propeptide of aleurein (proaleurein).

It localises to the membrane. The protein resides in the golgi apparatus membrane. Its subcellular location is the cytoplasmic vesicle. The protein localises to the clathrin-coated vesicle membrane. It is found in the prevacuolar compartment membrane. Vacuolar-sorting receptor (VSR) involved in clathrin-coated vesicles sorting from Golgi apparatus to vacuoles. Seems to binds preferentially proteins containing a N-terminal NPIR motif. This is Vacuolar-sorting receptor 1 (BP80) from Pisum sativum (Garden pea).